The following is a 408-amino-acid chain: Peptidoglycan muramidase Tse3 (408 aa).

Asparagine 181, aspartate 253, glutamine 254, glutamate 258, glutamate 375, serine 378, arginine 379, aspartate 382, and asparagine 384 together coordinate Ca(2+).

Forms a heterotetramer with Tsi3 consisting of two Tse3 dimers and two Tsi3 dimers. Formation of the complex inactivates Tse3 enzymatic activity. It depends on Ca(2+) as a cofactor.

It localises to the host membrane. Its subcellular location is the secreted. The catalysed reaction is Hydrolysis of (1-&gt;4)-beta-linkages between N-acetylmuramic acid and N-acetyl-D-glucosamine residues in a peptidoglycan and between N-acetyl-D-glucosamine residues in chitodextrins.. Enzymatic activity depends on membrane binding. Its function is as follows. Toxin secreted by the H1 type VI (H1-T6SS) secretion system into the periplasm of recipient cells. Degrades peptidoglycan via muramidase activity thereby helping itself to compete with other bacteria. To protect itself, the bacterium synthesizes immunity protein Tsi3 that specifically interacts with and inactivates cognate toxin. The polypeptide is Peptidoglycan muramidase Tse3 (Pseudomonas aeruginosa (strain ATCC 15692 / DSM 22644 / CIP 104116 / JCM 14847 / LMG 12228 / 1C / PRS 101 / PAO1)).